We begin with the raw amino-acid sequence, 554 residues long: Glucose-6-phosphate isomerase (554 aa).

Catalysis depends on Glu-359, which acts as the Proton donor. Active-site residues include His-390 and Lys-518.

It belongs to the GPI family.

It localises to the cytoplasm. The enzyme catalyses alpha-D-glucose 6-phosphate = beta-D-fructose 6-phosphate. It functions in the pathway carbohydrate biosynthesis; gluconeogenesis. Its pathway is carbohydrate degradation; glycolysis; D-glyceraldehyde 3-phosphate and glycerone phosphate from D-glucose: step 2/4. In terms of biological role, catalyzes the reversible isomerization of glucose-6-phosphate to fructose-6-phosphate. The polypeptide is Glucose-6-phosphate isomerase (Pseudomonas syringae pv. tomato (strain ATCC BAA-871 / DC3000)).